The primary structure comprises 705 residues: Kinesin-like protein KIF2A (705 aa).

Residues 65–185 (DLVPDEDIEP…QQELREKRAQ (121 aa)) form a disordered region. Serine 75 carries the post-translational modification Phosphoserine. Threonine 96 bears the Phosphothreonine mark. Serine 99 carries the phosphoserine modification. Lysine 101 carries the post-translational modification N6-acetyllysine. Over residues 122–139 (LPEQSSSAQQNGSVSDIS) the composition is skewed to polar residues. Residues serine 134 and serine 139 each carry the phosphoserine modification. The stretch at 153–186 (RRKSNCVKEVEKLQEKREKRRLQQQELREKRAQD) forms a coiled coil. The segment covering 158–185 (CVKEVEKLQEKREKRRLQQQELREKRAQ) has biased composition (basic and acidic residues). The Kinesin motor domain maps to 222-552 (RICVCVRKRP…LRYANRVKEL (331 aa)). 312-319 (GQTGSGKT) lines the ATP pocket. The residue at position 572 (glutamine 572) is a Phosphoserine. Residues 659 to 698 (ATQLEAILEQKIDILTELRDKVKSFRAALQEEEQASKQIN) adopt a coiled-coil conformation.

The protein belongs to the TRAFAC class myosin-kinesin ATPase superfamily. Kinesin family. MCAK/KIF2 subfamily. As to quaternary structure, interacts with AURKA and PLK1. Interacts with PSRC1. Interacts with MCRS1; the interaction enhances recruitment of KIF2A to the minus ends of spindle microtubules which promotes chromosome alignment.

It is found in the cytoplasm. It localises to the cytoskeleton. The protein resides in the microtubule organizing center. The protein localises to the centrosome. Its subcellular location is the spindle pole. It is found in the spindle. Plus end-directed microtubule-dependent motor required for normal brain development. May regulate microtubule dynamics during axonal growth. Required for normal progression through mitosis. Required for normal congress of chromosomes at the metaphase plate. Required for normal spindle dynamics during mitosis. Promotes spindle turnover. Implicated in formation of bipolar mitotic spindles. Has microtubule depolymerization activity. The sequence is that of Kinesin-like protein KIF2A from Rattus norvegicus (Rat).